We begin with the raw amino-acid sequence, 897 residues long: F-BAR domain only protein 1 (897 aa).

The tract at residues 1-276 (MIHFFHTLQG…VGFEEYLSSL (276 aa)) is mediates membrane-binding. In terms of domain architecture, F-BAR spans 2 to 248 (IHFFHTLQGE…NVENIGIENL (247 aa)). Residues 134–154 (LQKTREGYHSKCVELERLRKE) adopt a coiled-coil conformation. Positions 475–537 (VEDSGLDSPS…PNPAPSSQSN (63 aa)) are disordered. Residues 501–520 (PSSQSQSKDSINAASQSRGG) show a composition bias toward polar residues. The MHD domain maps to 630–894 (SWPVAAAITE…RFATGKYMAG (265 aa)).

This sequence belongs to the FCHO family. As to quaternary structure, may oligomerize and form homotetramer. Interacts with acvr1l/alk8; linking this receptor to clathrin-mediated endocytosis.

It localises to the membrane. The protein localises to the clathrin-coated pit. Its function is as follows. May function in an early step of clathrin-mediated endocytosis. May regulate Bmp signaling by regulating clathrin-mediated endocytosis of Bmp receptors. The protein is F-BAR domain only protein 1 (fcho1) of Danio rerio (Zebrafish).